Consider the following 570-residue polypeptide: MSMFCYQCQEAAGGRGCTVKGVCGKTEDIAKTQDLIIYVVKGIAIYSSQVREIGLNTSEADKFIVESLFSTITNANFDAKALNARVQEGLKIRQSLKDAIIKAGGSYNSKENKSWTSKFLSVLGIKNDKDEKEIHDAAVWAANNPEDFKKKAETVGVLATENEDIRSLRELLTYGLKGMAAYLEHANNLGYDEDSIHAFMEKALVATLDDTLSADELTALVLECGKYGVDVMALLDKANTSTYGNPEITKVNIGVRNNPGILISGHDLKDMEELLKQTEGTGVDVYTHSEMLPANYYPAFKKYKHFVGNYGNAWWKQNEEFEAFNGPILMTTNCIVTPKASYKDRMYTTGVTGFEGVKHINASKDGKKDFSEIIEHAKRCSSPKEIEKGEIIGGFAHNQVLALAPQVVDAVKTGAIKRFFVMAGCDGRMKSRNYYTDFAKALPKDTVILTAGCAKYKYNKLDLGDINGIPRVLDAGQCNDSYSLAVIALKLKEVFELEDINELPISYNIAWYEQKAVIVLLALLHLGVKNIHLGPTLPAFLSPNVAKILVENFGIGTISSVDEDIKMFMN.

Cys5, Cys8, Cys17, and Cys23 together coordinate [4Fe-4S] cluster. 8 residues coordinate hybrid [4Fe-2O-2S] cluster: His266, Glu290, Cys334, Cys425, Cys453, Cys478, Glu513, and Lys515. Residue Cys425 is modified to Cysteine persulfide.

It belongs to the HCP family. The cofactor is [4Fe-4S] cluster. It depends on hybrid [4Fe-2O-2S] cluster as a cofactor.

It localises to the cytoplasm. It catalyses the reaction A + NH4(+) + H2O = hydroxylamine + AH2 + H(+). Functionally, catalyzes the reduction of hydroxylamine to form NH(3) and H(2)O. This is Hydroxylamine reductase from Clostridium botulinum (strain Okra / Type B1).